The following is a 299-amino-acid chain: GTPase Era (299 aa).

Positions 5-172 (KSGFVSIIGR…IDVLKTYLPE (168 aa)) constitute an Era-type G domain. The G1 stretch occupies residues 13–20 (GRPNVGKS). 13–20 (GRPNVGKS) lines the GTP pocket. The interval 39–43 (QTTRN) is G2. Positions 60 to 63 (DTPG) are G3. Residues 60–64 (DTPGI) and 122–125 (NKID) contribute to the GTP site. Positions 122–125 (NKID) are G4. Residues 151–153 (ISA) form a G5 region. The KH type-2 domain occupies 203-280 (TSEEIPHAIG…YLELWVKVQK (78 aa)).

This sequence belongs to the TRAFAC class TrmE-Era-EngA-EngB-Septin-like GTPase superfamily. Era GTPase family. In terms of assembly, monomer.

It localises to the cytoplasm. The protein localises to the cell membrane. In terms of biological role, an essential GTPase that binds both GDP and GTP, with rapid nucleotide exchange. Plays a role in 16S rRNA processing and 30S ribosomal subunit biogenesis and possibly also in cell cycle regulation and energy metabolism. The polypeptide is GTPase Era (Staphylococcus haemolyticus (strain JCSC1435)).